A 234-amino-acid polypeptide reads, in one-letter code: Large ribosomal subunit protein uL1 (234 aa).

The protein belongs to the universal ribosomal protein uL1 family. As to quaternary structure, part of the 50S ribosomal subunit.

Its function is as follows. Binds directly to 23S rRNA. The L1 stalk is quite mobile in the ribosome, and is involved in E site tRNA release. Functionally, protein L1 is also a translational repressor protein, it controls the translation of the L11 operon by binding to its mRNA. This is Large ribosomal subunit protein uL1 from Anaeromyxobacter sp. (strain Fw109-5).